A 515-amino-acid polypeptide reads, in one-letter code: Slowpoke-binding protein (515 aa).

The segment at 1 to 31 (MFKFNKAAQQQRIDNRNSAVTGHDPFVRPPV) is disordered. The segment covering 7–20 (AAQQQRIDNRNSAV) has biased composition (polar residues). 2 positions are modified to phosphoserine: Ser-54 and Ser-79. Polar residues predominate over residues 73–82 (SSNRSASSEQ). The segment at 73-94 (SSNRSASSEQDNSDLSEHSEKS) is disordered. Positions 191 to 203 (NWFLVTDASVRTD) are interaction with Slo. The segment at 483–503 (SLSEANSPCTPPSTPHDRRTG) is disordered.

Interacts specifically with Slo; which activates Slo activity. Interacts with 14-3-3-zeta when phosphorylated. Forms a heterotetrameric complex containing phosphorylated Slob, Slo and 14-3-3-zeta, which represses Slo activity due to the indirect interaction between Slo and 14-3-3-zeta. In terms of processing, phosphorylated. Phosphorylation of Ser-54 and Ser-79 is required for the interaction with 14-3-3-zeta but not with that of Slo. In terms of tissue distribution, expressed in head. In larval brain, it is expressed in the mushroom body. Also expressed in larval muscles.

The protein resides in the cytoplasm. Functionally, regulator of calcium-activated channel Slo. Increases or decreases the voltage sensitivity of Slo, depending on the absence or presence of 14-3-3-zeta in the complex, respectively. The protein is Slowpoke-binding protein (Slob) of Drosophila melanogaster (Fruit fly).